A 330-amino-acid polypeptide reads, in one-letter code: Fructose-1,6-bisphosphatase class 1 (330 aa).

Mg(2+) is bound by residues Glu-84, Asp-103, Leu-105, and Asp-106. Residues 106–109, Asn-196, and Lys-262 contribute to the substrate site; that span reads DGSS. A Mg(2+)-binding site is contributed by Glu-268.

It belongs to the FBPase class 1 family. As to quaternary structure, homotetramer. Mg(2+) serves as cofactor.

The protein localises to the cytoplasm. The enzyme catalyses beta-D-fructose 1,6-bisphosphate + H2O = beta-D-fructose 6-phosphate + phosphate. It functions in the pathway carbohydrate biosynthesis; gluconeogenesis. The sequence is that of Fructose-1,6-bisphosphatase class 1 from Shewanella sp. (strain MR-7).